We begin with the raw amino-acid sequence, 264 residues long: 4-oxalocrotonate decarboxylase (264 aa).

This sequence belongs to the hydratase/decarboxylase family.

The enzyme catalyses (3E)-2-oxohex-3-enedioate + H(+) = 2-oxopent-4-enoate + CO2. It participates in aromatic compound metabolism; benzoate degradation via hydroxylation. This Pseudomonas sp. (strain CF600) protein is 4-oxalocrotonate decarboxylase (dmpH).